Reading from the N-terminus, the 290-residue chain is Carbonic anhydrase-related protein (290 aa).

Serine 5 is modified (phosphoserine). Residues 27-289 form the Alpha-carbonic anhydrase domain; the sequence is VEWGYEEGVE…LSDRVIRAAF (263 aa). Residue histidine 87 is the Proton donor/acceptor of the active site. Histidine 118 and histidine 141 together coordinate Zn(2+).

Belongs to the alpha-carbonic anhydrase family.

Its function is as follows. Does not have a carbonic anhydrase catalytic activity. The sequence is that of Carbonic anhydrase-related protein (Ca8) from Rattus norvegicus (Rat).